Consider the following 472-residue polypeptide: Ras-GEF domain-containing family member 1B (472 aa).

The N-terminal Ras-GEF domain maps to 34 to 164 (HDNNLLSGSL…MMQCLIRKLA (131 aa)). The Ras-GEF domain maps to 204 to 452 (DPYTLAQQLT…YLASYESEGP (249 aa)).

In terms of assembly, interacts with CCDC124 during cytokinesis. Interacts with Ras family proteins.

It is found in the early endosome. The protein resides in the late endosome. It localises to the midbody. Its function is as follows. Guanine nucleotide exchange factor (GEF) with specificity for RAP2A, it doesn't seems to activate other Ras family proteins (in vitro). This chain is Ras-GEF domain-containing family member 1B (RASGEF1B), found in Pongo abelii (Sumatran orangutan).